The primary structure comprises 251 residues: Copper transport protein CTR1 (251 aa).

A helical membrane pass occupies residues 90–110; sequence AFGIFVLLFFVAFLARMLEFV. Over residues 157 to 173 the composition is skewed to basic and acidic residues; it reads DESIDKQNSPQHEETTK. Residues 157 to 176 form a disordered region; sequence DESIDKQNSPQHEETTKARG. The helical transmembrane segment at 208–228 threads the bilayer; that stretch reads MLAAMTYTLTYFFAVVIGSGV.

In terms of assembly, oligomer.

Its subcellular location is the cell membrane. Its function is as follows. Required for high affinity copper (probably reduced Cu I) transport into the cell. The sequence is that of Copper transport protein CTR1 (CTR1) from Candida albicans (strain SC5314 / ATCC MYA-2876) (Yeast).